The following is a 91-amino-acid chain: DNA/RNA-binding protein Alba (91 aa).

This sequence belongs to the histone-like Alba family.

It localises to the cytoplasm. The protein localises to the chromosome. Binds double-stranded DNA tightly but without sequence specificity. Involved in DNA compaction. This is DNA/RNA-binding protein Alba from Methanoculleus marisnigri (strain ATCC 35101 / DSM 1498 / JR1).